Here is a 216-residue protein sequence, read N- to C-terminus: MIITIDGPSGTGKSTIAKALATELNFNYCNTGAMYRTLAYTHLQEPWQALPIKELIDNPPFSFSFISGQPLEAFLEGQLLSAELGTQEVANAASKLSQLPEVRSFMHKLQRKYAELGNCVFEGRDMGSKVFPDADVKIFLTASAEVRASRRLKDLPENSLSKEALHAELVKRDEADSQRLHDPLIIPEGAIILDSSDLTISQVLEKILALVSPNLP.

7–15 is a binding site for ATP; sequence GPSGTGKST.

Belongs to the cytidylate kinase family. Type 1 subfamily.

The protein resides in the cytoplasm. It carries out the reaction CMP + ATP = CDP + ADP. It catalyses the reaction dCMP + ATP = dCDP + ADP. This Chlamydia caviae (strain ATCC VR-813 / DSM 19441 / 03DC25 / GPIC) (Chlamydophila caviae) protein is Cytidylate kinase.